The sequence spans 304 residues: Mycothiol acetyltransferase (304 aa).

Glutamate 36 is a 1D-myo-inositol 2-(L-cysteinylamino)-2-deoxy-alpha-D-glucopyranoside binding site. Residue 73 to 75 (LFV) participates in acetyl-CoA binding. An N-acetyltransferase domain is found at 145–304 (LEIQTYTESV…EEHCVWAKSD (160 aa)). The 1D-myo-inositol 2-(L-cysteinylamino)-2-deoxy-alpha-D-glucopyranoside site is built by glutamate 179, lysine 225, and glutamate 236. 240 to 242 (VGL) contributes to the acetyl-CoA binding site. Position 274 (tyrosine 274) interacts with 1D-myo-inositol 2-(L-cysteinylamino)-2-deoxy-alpha-D-glucopyranoside. An acetyl-CoA-binding site is contributed by 279–284 (NDPAVK).

This sequence belongs to the acetyltransferase family. MshD subfamily. Monomer.

The enzyme catalyses 1D-myo-inositol 2-(L-cysteinylamino)-2-deoxy-alpha-D-glucopyranoside + acetyl-CoA = mycothiol + CoA + H(+). Functionally, catalyzes the transfer of acetyl from acetyl-CoA to desacetylmycothiol (Cys-GlcN-Ins) to form mycothiol. This chain is Mycothiol acetyltransferase, found in Corynebacterium aurimucosum (strain ATCC 700975 / DSM 44827 / CIP 107346 / CN-1) (Corynebacterium nigricans).